The primary structure comprises 279 residues: MTQFDKQYNSIIKDIMNNGISDEEFNVRTKWDSDGTPAHTLSVISKQMRFDNSEVPILTTKKVAWKTAIKELLWIWQLKSNDVTELNKMGVHIWDQWKQEDGTIGHAYGFQLGKKNRNLNGEKVDQVDYLLHQLKNNPSSRRHITMLWNPDELDSMALTPCVYETQWYVKQGKLHLEVRARSNDMALGNPFNVFQYNVLQRMIAQVTGYELGEYIFNIGDCHVYTRHIDNLKIQMEREQFEAPELWINPEVKDFYDFTIDDFKLFNYKHGDKLLFEVAV.

141-142 is a dUMP binding site; the sequence is RR. The active-site Nucleophile is the Cys161. DUMP is bound by residues 181 to 184, Asn192, and 222 to 224; these read RSND and HVY. Asp184 contacts (6R)-5,10-methylene-5,6,7,8-tetrahydrofolate. Residue Ala278 participates in (6R)-5,10-methylene-5,6,7,8-tetrahydrofolate binding.

Belongs to the thymidylate synthase family. Bacterial-type ThyA subfamily. Homodimer.

The protein localises to the cytoplasm. The enzyme catalyses dUMP + (6R)-5,10-methylene-5,6,7,8-tetrahydrofolate = 7,8-dihydrofolate + dTMP. It participates in pyrimidine metabolism; dTTP biosynthesis. Catalyzes the reductive methylation of 2'-deoxyuridine-5'-monophosphate (dUMP) to 2'-deoxythymidine-5'-monophosphate (dTMP) while utilizing 5,10-methylenetetrahydrofolate (mTHF) as the methyl donor and reductant in the reaction, yielding dihydrofolate (DHF) as a by-product. This enzymatic reaction provides an intracellular de novo source of dTMP, an essential precursor for DNA biosynthesis. The chain is Thymidylate synthase 1 from Bacillus spizizenii (strain ATCC 23059 / NRRL B-14472 / W23) (Bacillus subtilis subsp. spizizenii).